The following is a 123-amino-acid chain: KxDL motif-containing protein LO9-177 (123 aa).

The KxDL motif lies at lysine 78–leucine 81.

It belongs to the KXD1 family. Homodimer. Component of a nuclear cell elongation controlling complex made of ILI5/BUL1, LO9-177 and BC1. Binds directly to ILI5/BUL1, ILI4/BU1, BUL2 and BUL3. Binds to BC1 in the nucleus. Interacts with BCL1.

Its subcellular location is the nucleus. It is found in the cytoplasm. Contributes, together with ILI5/BUL1 and BC1, to the promotion of leaf inclination and grain size by modulating cell elongation. The chain is KxDL motif-containing protein LO9-177 from Oryza sativa subsp. indica (Rice).